The sequence spans 142 residues: Prefoldin subunit alpha 2 (142 aa).

It belongs to the prefoldin subunit alpha family. In terms of assembly, heterohexamer of two alpha and four beta subunits.

The protein resides in the cytoplasm. In terms of biological role, molecular chaperone capable of stabilizing a range of proteins. Seems to fulfill an ATP-independent, HSP70-like function in archaeal de novo protein folding. This is Prefoldin subunit alpha 2 from Thermococcus kodakarensis (strain ATCC BAA-918 / JCM 12380 / KOD1) (Pyrococcus kodakaraensis (strain KOD1)).